Here is a 410-residue protein sequence, read N- to C-terminus: E3 ubiquitin-protein ligase MARCHF4 (410 aa).

The N-terminal stretch at 1-18 is a signal peptide; it reads MLMPLCGLLWWWWCCCSG. A disordered region spans residues 92-136; that stretch reads GPREVVGREPPPVPPPPPLPPSSVEDDWGGPATEPPASLLSSASS. Over residues 100-112 the composition is skewed to pro residues; that stretch reads EPPPVPPPPPLPP. Residues 126–136 show a composition bias toward low complexity; it reads PPASLLSSASS. The RING-CH-type zinc-finger motif lies at 155–215; it reads DSGMRTPLCR…ELCYYKYHVI (61 aa). Zn(2+) contacts are provided by cysteine 163, cysteine 166, cysteine 179, cysteine 181, histidine 189, cysteine 192, cysteine 205, and cysteine 208. The next 2 membrane-spanning stretches (helical) occupy residues 238-258 and 272-292; these read VAAA…LIWS and LFQI…GLII. 2 disordered regions span residues 324–372 and 390–410; these read EDQK…SGPL and PHEQ…VTTV. Residues 333 to 346 are compositionally biased toward polar residues; the sequence is NPRTSSSTQANIPS. Low complexity predominate over residues 352 to 366; it reads AGTPAPEQGPAQAAG.

In terms of tissue distribution, expressed in brain and placenta.

It is found in the golgi apparatus membrane. The enzyme catalyses S-ubiquitinyl-[E2 ubiquitin-conjugating enzyme]-L-cysteine + [acceptor protein]-L-lysine = [E2 ubiquitin-conjugating enzyme]-L-cysteine + N(6)-ubiquitinyl-[acceptor protein]-L-lysine.. It functions in the pathway protein modification; protein ubiquitination. Functionally, E3 ubiquitin-protein ligase that may mediate ubiquitination of MHC-I and CD4, and promote their subsequent endocytosis and sorting to lysosomes via multivesicular bodies. E3 ubiquitin ligases accept ubiquitin from an E2 ubiquitin-conjugating enzyme in the form of a thioester and then directly transfer the ubiquitin to targeted substrates. The protein is E3 ubiquitin-protein ligase MARCHF4 of Homo sapiens (Human).